Here is a 276-residue protein sequence, read N- to C-terminus: NH(3)-dependent NAD(+) synthetase (276 aa).

43–50 contacts ATP; it reads GISGGVDS. Mg(2+) is bound at residue D49. R146 is a deamido-NAD(+) binding site. T166 contributes to the ATP binding site. Residue E171 coordinates Mg(2+). Deamido-NAD(+)-binding residues include K179 and D186. K195 and T217 together coordinate ATP. 266-267 is a binding site for deamido-NAD(+); that stretch reads HK.

Belongs to the NAD synthetase family. Homodimer.

It catalyses the reaction deamido-NAD(+) + NH4(+) + ATP = AMP + diphosphate + NAD(+) + H(+). It functions in the pathway cofactor biosynthesis; NAD(+) biosynthesis; NAD(+) from deamido-NAD(+) (ammonia route): step 1/1. In terms of biological role, catalyzes the ATP-dependent amidation of deamido-NAD to form NAD. Uses ammonia as a nitrogen source. The protein is NH(3)-dependent NAD(+) synthetase of Shewanella amazonensis (strain ATCC BAA-1098 / SB2B).